The sequence spans 317 residues: MFQAAERPQEWAMEGPRDGLKKERLLDDRHDSGLDSMKDEEYEQMVKELQEIRLEPQEVPRGSEPWKQQLTEDGDSFLHLAIIHEEKALTMEVIRQVKGDLAFLNFQNNLQQTPLHLAVITNQPEIAEALLGAGCDPELRDFRGNTPLHLACEQGCLASVGVLTQSCTTPHLHSILKATNYNGHTCLHLASIHGYLGIVELLVSLGADVNAQEPCNGRTALHLAVDLQNPDLVSLLLKCGADVNRVTYQGYSPYQLTWGRPSTRIQQQLGQLTLENLQMLPESEDEESYDTESEFTEFTEDELPYDDCVFGGQRLTL.

The interval 1 to 39 is disordered; sequence MFQAAERPQEWAMEGPRDGLKKERLLDDRHDSGLDSMKD. Basic and acidic residues predominate over residues 15-39; sequence GPRDGLKKERLLDDRHDSGLDSMKD. Residue Lys-21 forms a Glycyl lysine isopeptide (Lys-Gly) (interchain with G-Cter in SUMO); alternate linkage. Lys-21 participates in a covalent cross-link: Glycyl lysine isopeptide (Lys-Gly) (interchain with G-Cter in ubiquitin); alternate. A Glycyl lysine isopeptide (Lys-Gly) (interchain with G-Cter in ubiquitin) cross-link involves residue Lys-22. The Destruction motif motif lies at 30–36; that stretch reads HDSGLDS. A Phosphoserine; by IKKA and IKKE modification is found at Ser-32. The residue at position 36 (Ser-36) is a Phosphoserine; by IKKA, IKKB, IKKE and TBK1. Tyr-42 is subject to Phosphotyrosine; by Tyr-kinases. The Nuclear export signal motif lies at 45-54; the sequence is MVKELQEIRL. 5 ANK repeats span residues 73-103, 110-139, 143-172, 182-211, and 216-245; these read DGDS…DLAF, LQQT…DPEL, RGNT…TPHL, NGHT…DVNA, and NGRT…DVNR. Positions 110–120 match the Nuclear import signal motif; sequence LQQTPLHLAVI. (3S)-3-hydroxyasparagine; by HIF1AN; partial occurs at positions 210 and 244. 2 positions are modified to phosphoserine; by CK2: Ser-283 and Ser-288. Thr-291 is modified (phosphothreonine; by CK2). The residue at position 293 (Ser-293) is a Phosphoserine; by CK2. Residue Thr-299 is modified to Phosphothreonine; by CK2.

The protein belongs to the NF-kappa-B inhibitor family. As to quaternary structure, interacts with RELA; the interaction requires the nuclear import signal. Part of a 70-90 kDa complex at least consisting of CHUK, IKBKB, NFKBIA, RELA, ELP1 and MAP3K14. Interacts with NKIRAS1 and NKIRAS2. Interacts with isoform 1 and isoform 2 of RWDD3; the interaction enhances sumoylation. Interacts with PRMT2. Interacts with PRKACA in platelets; this interaction is disrupted by thrombin and collagen. Interacts with MEFV. Interacts with DDRGK1; positively regulates NFKBIA phosphorylation and degradation. Interacts with HNRNPA2B1; the interaction may be mediated by the RRM2 domain of HNRNPA2B1, and HNRNPA2B1 may interact simultaneously with FAM76B and either NFKBIA or NFKBIE to form a complex. In terms of assembly, (Microbial infection) Interacts with HBV protein X. In terms of processing, phosphorylated at Ser-32 and Ser-36 by IKKA/CHUK and IKKB/IKBKB; disables inhibition of NF-kappa-B DNA-binding activity. Phosphorylation at positions 32 and 36 is prerequisite to recognition by the SCF(FBXW11) and SCF(BTRC) complexes, leading to polyubiquitination and subsequent degradation. Phosphorylated at Ser-32 in response to FK506 treatment: phosphorylation is independent of IKKA/CHUK and IKKB/IKBKB and promotes NFKBIA degradation, followed by NF-kappa-B activation. Phosphorylated at Tyr-42: its effect is however unclear. According to a report, phosphorylation at Tyr-42 activates NF-kappa-B without triggering proteolytic degradation of NFKBIA. According to another publication, phosphorylation at Tyr-42 inhibits NF-kappa-B activity by preventing phosphorylation at Ser-32 and Ser-36 and subsequent ubiquitination and degradation. Post-translationally, polyubiquitinated at Lys-21 and/or Lys-22 following phosphorylation at Ser-32 and Ser-36. Monoubiquitinated at Lys-21 and/or Lys-22 by UBE2D3. Ubiquitin chain elongation is then performed by CDC34 in cooperation with the SCF(FBXW11) E3 ligase complex, building ubiquitin chains from the UBE2D3-primed NFKBIA-linked ubiquitin. The resulting polyubiquitination leads to protein degradation. Also ubiquitinated by the SCF(BTRC) complex following stimulus-dependent phosphorylation at Ser-32 and Ser-36. Deubiquitinated by USP38, leading to NF-kappa-B inhibition. Sumoylated; sumoylation requires the presence of the nuclear import signal. Sumoylation blocks ubiquitination and proteasome-mediated degradation of the protein thereby increasing the protein stability. In terms of processing, hydroxylated by HIF1AN. Post-translationally, (Microbial infection) Deubiquitinated by porcine reproductive and respiratory syndrome virus Nsp2 protein, which thereby interferes with NFKBIA degradation and impairs subsequent NF-kappa-B activation.

It localises to the cytoplasm. It is found in the nucleus. Its function is as follows. Inhibits the activity of dimeric NF-kappa-B/REL complexes by trapping REL (RELA/p65 and NFKB1/p50) dimers in the cytoplasm by masking their nuclear localization signals. On cellular stimulation by immune and pro-inflammatory responses, becomes phosphorylated promoting ubiquitination and degradation, enabling the dimeric RELA to translocate to the nucleus and activate transcription. The chain is NF-kappa-B inhibitor alpha (NFKBIA) from Homo sapiens (Human).